The following is a 250-amino-acid chain: 23S rRNA (guanosine-2'-O-)-methyltransferase RlmB (250 aa).

Residues G197, I217, and M226 each coordinate S-adenosyl-L-methionine.

Belongs to the class IV-like SAM-binding methyltransferase superfamily. RNA methyltransferase TrmH family. RlmB subfamily.

The protein localises to the cytoplasm. It carries out the reaction guanosine(2251) in 23S rRNA + S-adenosyl-L-methionine = 2'-O-methylguanosine(2251) in 23S rRNA + S-adenosyl-L-homocysteine + H(+). Its function is as follows. Specifically methylates the ribose of guanosine 2251 in 23S rRNA. This is 23S rRNA (guanosine-2'-O-)-methyltransferase RlmB from Neisseria meningitidis serogroup B (strain ATCC BAA-335 / MC58).